The following is a 117-amino-acid chain: Non-specific lipid-transfer protein 1 (117 aa).

Positions 1-26 are cleaved as a signal peptide; it reads MAYSAMTKLALVVALCMVVSVPIAQA. 4 cysteine pairs are disulfide-bonded: C29-C76, C39-C53, C54-C99, and C74-C113.

This sequence belongs to the plant LTP family.

In terms of biological role, plant non-specific lipid-transfer proteins transfer phospholipids as well as galactolipids across membranes. May play a role in wax or cutin deposition in the cell walls of expanding epidermal cells and certain secretory tissues. The protein is Non-specific lipid-transfer protein 1 of Prunus dulcis (Almond).